The chain runs to 258 residues: Ferredoxin--NADP reductase (258 aa).

The FAD-binding FR-type domain occupies 2–102 (SNLYTERVLS…RKPTGTLVHD (101 aa)). Residues R51, A52, Y53, S54, F67, I69, L76, T77, and T117 each coordinate FAD. Residues V144, R145, T181, R182, R190, S223, E227, F255, and E257 each coordinate NADP(+). FAD-binding residues include F255, E257, and K258.

Belongs to the ferredoxin--NADP reductase type 1 family. As to quaternary structure, monomer. It depends on FAD as a cofactor.

The catalysed reaction is 2 reduced [2Fe-2S]-[ferredoxin] + NADP(+) + H(+) = 2 oxidized [2Fe-2S]-[ferredoxin] + NADPH. Transports electrons between ferredoxin and NADPH. Provides electrons to heme oxygenase (pigA) allowing anaerobic heme degradation. Provides electrons necessary to reduce and mobilize Fe(3+) in a heterooligomeric bacterioferritin (BFR) complex to Fe(2+). Reduction of Fe(3+) in a pure FtnA BFR does not require Bfd. Reduction of Fe(3+) in a pure BfrB BFR does require Bfd. This chain is Ferredoxin--NADP reductase, found in Pseudomonas aeruginosa (strain ATCC 15692 / DSM 22644 / CIP 104116 / JCM 14847 / LMG 12228 / 1C / PRS 101 / PAO1).